The sequence spans 451 residues: UDP-glycosyltransferase 76E11 (451 aa).

UDP-alpha-D-glucose contacts are provided by residues S273, A332–Q334, H349–E357, and S371–Q374.

It belongs to the UDP-glycosyltransferase family.

Functionally, possesses low quercetin 3-O-glucosyltransferase and 7-O-glucosyltransferase activities in vitro. The protein is UDP-glycosyltransferase 76E11 (UGT76E11) of Arabidopsis thaliana (Mouse-ear cress).